The primary structure comprises 523 residues: Probable FAD synthase (523 aa).

Residues 20 to 111 (AIVVIGDEIL…TDQLHFSDEI (92 aa)) are molybdenum cofactor biosynthesis protein-like. Residues 332-489 (QIALSFNGGK…SLGGRDNTVK (158 aa)) are FAD synthase.

This sequence in the N-terminal section; belongs to the MoaB/Mog family. The protein in the C-terminal section; belongs to the PAPS reductase family. FAD1 subfamily. Mg(2+) is required as a cofactor.

The catalysed reaction is FMN + ATP + H(+) = FAD + diphosphate. The protein operates within cofactor biosynthesis; FAD biosynthesis; FAD from FMN: step 1/1. In terms of biological role, catalyzes the adenylation of flavin mononucleotide (FMN) to form flavin adenine dinucleotide (FAD) coenzyme. In Caenorhabditis briggsae, this protein is Probable FAD synthase.